The following is a 57-amino-acid chain: Potassium channel toxin alpha-KTx 8.7 (57 aa).

Residues 1 to 28 form the signal peptide; the sequence is MSRLYAIILIALVFNVIMTIMPDMKVEA. Intrachain disulfides connect C31/C47, C34/C52, and C38/C54.

As to expression, expressed by the venom gland.

The protein localises to the secreted. Its function is as follows. Inhibits voltage-gated potassium channel rKv1.1/KCNA1 at nanomolar ranges (IC(50)=8.5 nM). The chain is Potassium channel toxin alpha-KTx 8.7 from Mesobuthus eupeus (Lesser Asian scorpion).